The chain runs to 94 residues: Neutrophil antibiotic peptide NP-2 (94 aa).

An N-terminal signal peptide occupies residues 1–19 (MRTLTLLTALLLLALHTQA). Residues 20–62 (KSPQGTAEEAPDQEQLVMEDQDISISFGGDKGTALQDADVKAG) constitute a propeptide that is removed on maturation. 3 disulfides stabilise this stretch: Cys65–Cys93, Cys67–Cys82, and Cys72–Cys92.

It belongs to the alpha-defensin family. Highest expression in bone marrow and to a much lesser extent in small intestine.

Its subcellular location is the secreted. Its function is as follows. Active in vitro against S.aureus, fungi, Gram-positive and Gram-negative bacteria and to a lesser extent against an enveloped virus. The chain is Neutrophil antibiotic peptide NP-2 (Defa) from Rattus norvegicus (Rat).